Here is a 444-residue protein sequence, read N- to C-terminus: Aspartate--tRNA(Asp/Asn) ligase (444 aa).

An L-aspartate-binding site is contributed by glutamate 176. The aspartate stretch occupies residues 198–201 (QLFK). Arginine 220 serves as a coordination point for L-aspartate. ATP is bound by residues 220–222 (RAE), 228–230 (RHL), and glutamate 367. The Mg(2+) site is built by glutamate 367 and serine 370. Serine 370 and arginine 374 together coordinate L-aspartate. ATP is bound at residue 415-418 (GCER).

The protein belongs to the class-II aminoacyl-tRNA synthetase family. Type 2 subfamily. Homodimer. It depends on Mg(2+) as a cofactor.

It localises to the cytoplasm. The enzyme catalyses tRNA(Asx) + L-aspartate + ATP = L-aspartyl-tRNA(Asx) + AMP + diphosphate. In terms of biological role, aspartyl-tRNA synthetase with relaxed tRNA specificity since it is able to aspartylate not only its cognate tRNA(Asp) but also tRNA(Asn). Reaction proceeds in two steps: L-aspartate is first activated by ATP to form Asp-AMP and then transferred to the acceptor end of tRNA(Asp/Asn). This is Aspartate--tRNA(Asp/Asn) ligase from Methanosarcina acetivorans (strain ATCC 35395 / DSM 2834 / JCM 12185 / C2A).